The chain runs to 223 residues: von Willebrand factor C domain-containing protein 2-like (223 aa).

Residues 1-21 form the signal peptide; sequence MGPFLPAICVVLLALNAAVSP. VWFC domains lie at 51-110 and 114-172; these read KGCV…PECK and NFCE…PICK.

It is found in the secreted. Its subcellular location is the synapse. Its function is as follows. May play a role in bone differentiation and matrix mineralization. May play a role in neural development. This chain is von Willebrand factor C domain-containing protein 2-like (vwc2l), found in Danio rerio (Zebrafish).